The primary structure comprises 156 residues: 6,7-dimethyl-8-ribityllumazine synthase (156 aa).

5-amino-6-(D-ribitylamino)uracil-binding positions include phenylalanine 22, 57-59, and 81-83; these read AYE and TVI. Position 86 to 87 (86 to 87) interacts with (2S)-2-hydroxy-3-oxobutyl phosphate; it reads GT. The active-site Proton donor is histidine 89. Phenylalanine 114 is a 5-amino-6-(D-ribitylamino)uracil binding site. Arginine 128 is a (2S)-2-hydroxy-3-oxobutyl phosphate binding site.

It belongs to the DMRL synthase family. In terms of assembly, forms an icosahedral capsid composed of 60 subunits, arranged as a dodecamer of pentamers.

The catalysed reaction is (2S)-2-hydroxy-3-oxobutyl phosphate + 5-amino-6-(D-ribitylamino)uracil = 6,7-dimethyl-8-(1-D-ribityl)lumazine + phosphate + 2 H2O + H(+). It functions in the pathway cofactor biosynthesis; riboflavin biosynthesis; riboflavin from 2-hydroxy-3-oxobutyl phosphate and 5-amino-6-(D-ribitylamino)uracil: step 1/2. In terms of biological role, catalyzes the formation of 6,7-dimethyl-8-ribityllumazine by condensation of 5-amino-6-(D-ribitylamino)uracil with 3,4-dihydroxy-2-butanone 4-phosphate. This is the penultimate step in the biosynthesis of riboflavin. The polypeptide is 6,7-dimethyl-8-ribityllumazine synthase (Photorhabdus laumondii subsp. laumondii (strain DSM 15139 / CIP 105565 / TT01) (Photorhabdus luminescens subsp. laumondii)).